A 174-amino-acid chain; its full sequence is Fimbria A protein (174 aa).

Positions Met-1 to Ala-22 are cleaved as a signal peptide. Cys-41 and Cys-80 are oxidised to a cystine.

This sequence belongs to the fimbrial protein family.

The protein resides in the fimbrium. Functionally, major structural component of mannose-resistant fimbriae of Serratia marcescens. This is Fimbria A protein (smfA) from Serratia marcescens.